A 197-amino-acid chain; its full sequence is Phospholipid hydroperoxide glutathione peroxidase (197 aa).

Residue Ser40 is modified to Phosphoserine. Sec73 is a catalytic residue. Position 73 (Sec73) is a non-standard amino acid, selenocysteine.

It belongs to the glutathione peroxidase family. As to quaternary structure, monomer. Has a tendency to form higher mass oligomers. Interacts with FUNDC1; this interaction promotes GPX4 recruitment into mitochondria through TOM/TIM complex where it is degraded by mitophagy.

The protein resides in the mitochondrion. Its subcellular location is the cytoplasm. It catalyses the reaction a hydroperoxy polyunsaturated fatty acid + 2 glutathione = a hydroxy polyunsaturated fatty acid + glutathione disulfide + H2O. It carries out the reaction 2 glutathione + H2O2 = glutathione disulfide + 2 H2O. The enzyme catalyses tert-butyl hydroperoxide + 2 glutathione = tert-butanol + glutathione disulfide + H2O. The catalysed reaction is cumene hydroperoxide + 2 glutathione = 2-phenylpropan-2-ol + glutathione disulfide + H2O. It catalyses the reaction (9S)-hydroperoxy-(10E,12Z)-octadecadienoate + 2 glutathione = (9S)-hydroxy-(10E,12Z)-octadecadienoate + glutathione disulfide + H2O. It carries out the reaction (13S)-hydroperoxy-(9Z,11E)-octadecadienoate + 2 glutathione = (13S)-hydroxy-(9Z,11E)-octadecadienoate + glutathione disulfide + H2O. The enzyme catalyses (5S)-hydroperoxy-(6E,8Z,11Z,14Z)-eicosatetraenoate + 2 glutathione = (5S)-hydroxy-(6E,8Z,11Z,14Z)-eicosatetraenoate + glutathione disulfide + H2O. The catalysed reaction is (12R)-hydroperoxy-(5Z,8Z,10E,14Z)-eicosatetraenoate + 2 glutathione = (12R)-hydroxy-(5Z,8Z,10E,14Z)-eicosatetraenoate + glutathione disulfide + H2O. It catalyses the reaction (12S)-hydroperoxy-(5Z,8Z,10E,14Z)-eicosatetraenoate + 2 glutathione = (12S)-hydroxy-(5Z,8Z,10E,14Z)-eicosatetraenoate + glutathione disulfide + H2O. It carries out the reaction (15S)-hydroperoxy-(5Z,8Z,11Z,13E)-eicosatetraenoate + 2 glutathione = (15S)-hydroxy-(5Z,8Z,11Z,13E)-eicosatetraenoate + glutathione disulfide + H2O. The enzyme catalyses (5S)-hydroperoxy-(6E,8Z,11Z,14Z,17Z)-eicosapentaenoate + 2 glutathione = (5S)-hydroxy-(6E,8Z,11Z,14Z,17Z)-eicosapentaenoate + glutathione disulfide + H2O. The catalysed reaction is (12S)-hydroperoxy-(5Z,8Z,10E,14Z,17Z)-eicosapentaenoate + 2 glutathione = (12S)-hydroxy-(5Z,8Z,10E,14Z,17Z)-eicosapentaenoate + glutathione disulfide + H2O. It catalyses the reaction (15S)-hydroperoxy-(5Z,8Z,11Z,13E,17Z)-eicosapentaenoate + 2 glutathione = (15S)-hydroxy-(5Z,8Z,11Z,13E,17Z)-eicosapentaenoate + glutathione disulfide + H2O. It carries out the reaction (15S)-hydroperoxy-(11Z,13E)-eicosadienoate + 2 glutathione = (15S)-hydroxy-(11Z,13E)-eicosadienoate + glutathione disulfide + H2O. The enzyme catalyses (17S)-hydroperoxy-(4Z,7Z,10Z,13Z,15E,19Z)-docosahexaenoate + 2 glutathione = (17S)-hydroxy-(4Z,7Z,10Z,13Z,15E,19Z)-docosahexaenoate + glutathione disulfide + H2O. The catalysed reaction is a hydroperoxy-1,2-diacyl-glycero-3-phosphocholine + 2 glutathione = a hydroxy-1,2-diacyl-glycero-3-phosphocholine + glutathione disulfide + H2O. Functionally, essential antioxidant peroxidase that directly reduces phospholipid hydroperoxide even if they are incorporated in membranes and lipoproteins. Can also reduce fatty acid hydroperoxide, cholesterol hydroperoxide and thymine hydroperoxide. Plays a key role in protecting cells from oxidative damage by preventing membrane lipid peroxidation. Required to prevent cells from ferroptosis, a non-apoptotic cell death resulting from an iron-dependent accumulation of lipid reactive oxygen species. The presence of selenocysteine (Sec) versus Cys at the active site is essential for life: it provides resistance to overoxidation and prevents cells against ferroptosis. The presence of Sec at the active site is also essential for the survival of a specific type of parvalbumin-positive interneurons, thereby preventing against fatal epileptic seizures. May be required to protect cells from the toxicity of ingested lipid hydroperoxides. Required for normal sperm development and male fertility. Essential for maturation and survival of photoreceptor cells. Plays a role in a primary T-cell response to viral and parasitic infection by protecting T-cells from ferroptosis and by supporting T-cell expansion. Plays a role of glutathione peroxidase in platelets in the arachidonic acid metabolism. Reduces hydroperoxy ester lipids formed by a 15-lipoxygenase that may play a role as down-regulator of the cellular 15-lipoxygenase pathway. Can also reduce small soluble hydroperoxides such as H2O2, cumene hydroperoxide and tert-butyl hydroperoxide. This chain is Phospholipid hydroperoxide glutathione peroxidase, found in Sus scrofa (Pig).